The following is a 62-amino-acid chain: Large ribosomal subunit protein eL37 (62 aa).

Residues Cys20, Cys23, Cys35, and Cys38 each contribute to the Zn(2+) site. The C4-type zinc finger occupies 20 to 38 (CRRCGRVSYNVKKGYCAAC).

The protein belongs to the eukaryotic ribosomal protein eL37 family. Part of the 50S ribosomal subunit. The cofactor is Zn(2+).

Functionally, binds to the 23S rRNA. The chain is Large ribosomal subunit protein eL37 from Pyrococcus furiosus (strain ATCC 43587 / DSM 3638 / JCM 8422 / Vc1).